The primary structure comprises 204 residues: Auxin-binding protein 4 (204 aa).

The signal sequence occupies residues 1-41 (MVRRRPATGAAPRPHLAAVGRGLLLASVLAAAASSLPVAES). A disulfide bridge connects residues C43 and C196. Positions 98, 100, and 104 each coordinate Zn(2+). Residue N136 is glycosylated (N-linked (GlcNAc...) asparagine). Residue H147 coordinates Zn(2+). Positions 201-204 (KDEL) match the Prevents secretion from ER motif.

Homodimer.

It localises to the endoplasmic reticulum lumen. This is probably a receptor for the plant hormone auxin. The chain is Auxin-binding protein 4 (ABP4) from Zea mays (Maize).